Reading from the N-terminus, the 134-residue chain is Cytochrome b (134 aa).

3 consecutive transmembrane segments (helical) span residues 33-53, 77-98, and 113-133; these read FGSLLGLCLAVQILTGLFLAM, WLIRYMHANGASMFFICLFLHV, and WNMGIILLFAVMATAFMGYVL. Residues His-83 and His-97 each coordinate heme b.

It belongs to the cytochrome b family. As to quaternary structure, the cytochrome bc1 complex contains 11 subunits: 3 respiratory subunits (MT-CYB, CYC1 and UQCRFS1), 2 core proteins (UQCRC1 and UQCRC2) and 6 low-molecular weight proteins (UQCRH/QCR6, UQCRB/QCR7, UQCRQ/QCR8, UQCR10/QCR9, UQCR11/QCR10 and a cleavage product of UQCRFS1). This cytochrome bc1 complex then forms a dimer. The cofactor is heme b.

It is found in the mitochondrion inner membrane. Functionally, component of the ubiquinol-cytochrome c reductase complex (complex III or cytochrome b-c1 complex) that is part of the mitochondrial respiratory chain. The b-c1 complex mediates electron transfer from ubiquinol to cytochrome c. Contributes to the generation of a proton gradient across the mitochondrial membrane that is then used for ATP synthesis. The protein is Cytochrome b (MT-CYB) of Microtus subterraneus (European pine vole).